The sequence spans 440 residues: Ribosomal protein uS12 methylthiotransferase RimO (440 aa).

Positions 7–117 (PKISFVSLGC…VLDAVHRALP (111 aa)) constitute an MTTase N-terminal domain. 6 residues coordinate [4Fe-4S] cluster: Cys-16, Cys-52, Cys-81, Cys-148, Cys-152, and Cys-155. Positions 134–370 (LTPRHYAYLK…MARQQKISAQ (237 aa)) constitute a Radical SAM core domain. The region spanning 373-439 (KRKVGTRQQV…EYDLHGSVAG (67 aa)) is the TRAM domain.

Belongs to the methylthiotransferase family. RimO subfamily. [4Fe-4S] cluster is required as a cofactor.

Its subcellular location is the cytoplasm. The enzyme catalyses L-aspartate(89)-[ribosomal protein uS12]-hydrogen + (sulfur carrier)-SH + AH2 + 2 S-adenosyl-L-methionine = 3-methylsulfanyl-L-aspartate(89)-[ribosomal protein uS12]-hydrogen + (sulfur carrier)-H + 5'-deoxyadenosine + L-methionine + A + S-adenosyl-L-homocysteine + 2 H(+). Its function is as follows. Catalyzes the methylthiolation of an aspartic acid residue of ribosomal protein uS12. This chain is Ribosomal protein uS12 methylthiotransferase RimO, found in Afipia carboxidovorans (strain ATCC 49405 / DSM 1227 / KCTC 32145 / OM5) (Oligotropha carboxidovorans).